The sequence spans 209 residues: Thiamine-phosphate synthase (209 aa).

4-amino-2-methyl-5-(diphosphooxymethyl)pyrimidine contacts are provided by residues 35-39 and N67; that span reads QLRNK. Mg(2+) contacts are provided by D68 and D87. Residue S106 coordinates 4-amino-2-methyl-5-(diphosphooxymethyl)pyrimidine. 132–134 provides a ligand contact to 2-[(2R,5Z)-2-carboxy-4-methylthiazol-5(2H)-ylidene]ethyl phosphate; sequence TGS. 4-amino-2-methyl-5-(diphosphooxymethyl)pyrimidine is bound at residue K135. Residues G163 and 183 to 184 contribute to the 2-[(2R,5Z)-2-carboxy-4-methylthiazol-5(2H)-ylidene]ethyl phosphate site; that span reads IS.

This sequence belongs to the thiamine-phosphate synthase family. Requires Mg(2+) as cofactor.

The enzyme catalyses 2-[(2R,5Z)-2-carboxy-4-methylthiazol-5(2H)-ylidene]ethyl phosphate + 4-amino-2-methyl-5-(diphosphooxymethyl)pyrimidine + 2 H(+) = thiamine phosphate + CO2 + diphosphate. The catalysed reaction is 2-(2-carboxy-4-methylthiazol-5-yl)ethyl phosphate + 4-amino-2-methyl-5-(diphosphooxymethyl)pyrimidine + 2 H(+) = thiamine phosphate + CO2 + diphosphate. It catalyses the reaction 4-methyl-5-(2-phosphooxyethyl)-thiazole + 4-amino-2-methyl-5-(diphosphooxymethyl)pyrimidine + H(+) = thiamine phosphate + diphosphate. The protein operates within cofactor biosynthesis; thiamine diphosphate biosynthesis; thiamine phosphate from 4-amino-2-methyl-5-diphosphomethylpyrimidine and 4-methyl-5-(2-phosphoethyl)-thiazole: step 1/1. Condenses 4-methyl-5-(beta-hydroxyethyl)thiazole monophosphate (THZ-P) and 2-methyl-4-amino-5-hydroxymethyl pyrimidine pyrophosphate (HMP-PP) to form thiamine monophosphate (TMP). This Chlorobium phaeovibrioides (strain DSM 265 / 1930) (Prosthecochloris vibrioformis (strain DSM 265)) protein is Thiamine-phosphate synthase.